A 988-amino-acid polypeptide reads, in one-letter code: Bifunctional glutamine synthetase adenylyltransferase/adenylyl-removing enzyme (988 aa).

An adenylyl removase region spans residues 1 to 472 (MTKRETVERR…RYSALFEQET (472 aa)). The tract at residues 476-988 (GEAGNLVFTG…AFVAVVKNGG (513 aa)) is adenylyl transferase.

It belongs to the GlnE family. Mg(2+) serves as cofactor.

It catalyses the reaction [glutamine synthetase]-O(4)-(5'-adenylyl)-L-tyrosine + phosphate = [glutamine synthetase]-L-tyrosine + ADP. It carries out the reaction [glutamine synthetase]-L-tyrosine + ATP = [glutamine synthetase]-O(4)-(5'-adenylyl)-L-tyrosine + diphosphate. Its function is as follows. Involved in the regulation of glutamine synthetase GlnA, a key enzyme in the process to assimilate ammonia. When cellular nitrogen levels are high, the C-terminal adenylyl transferase (AT) inactivates GlnA by covalent transfer of an adenylyl group from ATP to specific tyrosine residue of GlnA, thus reducing its activity. Conversely, when nitrogen levels are low, the N-terminal adenylyl removase (AR) activates GlnA by removing the adenylyl group by phosphorolysis, increasing its activity. The regulatory region of GlnE binds the signal transduction protein PII (GlnB) which indicates the nitrogen status of the cell. The protein is Bifunctional glutamine synthetase adenylyltransferase/adenylyl-removing enzyme of Agrobacterium fabrum (strain C58 / ATCC 33970) (Agrobacterium tumefaciens (strain C58)).